The following is a 350-amino-acid chain: Protein RecA (350 aa).

ATP is bound at residue 68–75 (GPESSGKT).

The protein belongs to the RecA family.

Its subcellular location is the cytoplasm. Its function is as follows. Can catalyze the hydrolysis of ATP in the presence of single-stranded DNA, the ATP-dependent uptake of single-stranded DNA by duplex DNA, and the ATP-dependent hybridization of homologous single-stranded DNAs. It interacts with LexA causing its activation and leading to its autocatalytic cleavage. This is Protein RecA from Symbiobacterium thermophilum (strain DSM 24528 / JCM 14929 / IAM 14863 / T).